A 346-amino-acid chain; its full sequence is D-alanine--D-alanine ligase (346 aa).

Positions 133–327 (KLYAKSVGVK…ALADQISLEK (195 aa)) constitute an ATP-grasp domain. 159 to 211 (LSFPCIIKPARLGSSIGISIVKDEKDLEYAKDVGFEFDNDLVVEEFKNNIKEY) lines the ATP pocket. The Mg(2+) site is built by aspartate 284, glutamate 296, and asparagine 298.

Belongs to the D-alanine--D-alanine ligase family. Requires Mg(2+) as cofactor. Mn(2+) is required as a cofactor.

Its subcellular location is the cytoplasm. It catalyses the reaction 2 D-alanine + ATP = D-alanyl-D-alanine + ADP + phosphate + H(+). It participates in cell wall biogenesis; peptidoglycan biosynthesis. Its function is as follows. Cell wall formation. The protein is D-alanine--D-alanine ligase of Campylobacter jejuni subsp. jejuni serotype O:23/36 (strain 81-176).